The following is a 213-amino-acid chain: Outer-membrane lipoprotein carrier protein (213 aa).

A signal peptide spans 1–23; that stretch reads MKKLLKQSLLGFALVSMTGAAFA.

This sequence belongs to the LolA family. Monomer.

The protein resides in the periplasm. In terms of biological role, participates in the translocation of lipoproteins from the inner membrane to the outer membrane. Only forms a complex with a lipoprotein if the residue after the N-terminal Cys is not an aspartate (The Asp acts as a targeting signal to indicate that the lipoprotein should stay in the inner membrane). This Actinobacillus pleuropneumoniae serotype 3 (strain JL03) protein is Outer-membrane lipoprotein carrier protein.